The primary structure comprises 197 residues: dTTP/UTP pyrophosphatase (197 aa).

Asp70 serves as the catalytic Proton acceptor.

The protein belongs to the Maf family. YhdE subfamily. In terms of assembly, homodimer. Can also form homotetramers. It depends on a divalent metal cation as a cofactor.

Its subcellular location is the cytoplasm. It catalyses the reaction dTTP + H2O = dTMP + diphosphate + H(+). The enzyme catalyses UTP + H2O = UMP + diphosphate + H(+). The catalysed reaction is 5-methyl-UTP + H2O = 5-methyl-UMP + diphosphate + H(+). It carries out the reaction psi-UTP + H2O = psi-UMP + diphosphate + H(+). It catalyses the reaction 5-methyl-CTP + H2O = 5-methyl-CMP + diphosphate + H(+). Its function is as follows. Nucleoside triphosphate pyrophosphatase that hydrolyzes dTTP and UTP. Can also hydrolyze TTP and the modified nucleotides 5-methyl-UTP (m(5)UTP), pseudo-UTP and 5-methyl-CTP (m(5)CTP). Has weak activity with CTP. May have a dual role in cell division arrest and in preventing the incorporation of modified nucleotides into cellular nucleic acids. Important in maintenance of cell shape. This is dTTP/UTP pyrophosphatase (yhdE) from Escherichia coli (strain K12).